Reading from the N-terminus, the 165-residue chain is Lipoprotein signal peptidase (165 aa).

The next 3 helical transmembrane spans lie at 9-29 (PFLW…LAVV), 65-85 (WQKY…LFFL), and 97-119 (TGYA…HGFV). Catalysis depends on residues Asp121 and Asp139. Residues 134–154 (VFNIADVAICIGAGLLAIDAF) form a helical membrane-spanning segment.

This sequence belongs to the peptidase A8 family.

The protein localises to the cell inner membrane. The catalysed reaction is Release of signal peptides from bacterial membrane prolipoproteins. Hydrolyzes -Xaa-Yaa-Zaa-|-(S,diacylglyceryl)Cys-, in which Xaa is hydrophobic (preferably Leu), and Yaa (Ala or Ser) and Zaa (Gly or Ala) have small, neutral side chains.. The protein operates within protein modification; lipoprotein biosynthesis (signal peptide cleavage). Its function is as follows. This protein specifically catalyzes the removal of signal peptides from prolipoproteins. The protein is Lipoprotein signal peptidase of Histophilus somni (strain 129Pt) (Haemophilus somnus).